A 301-amino-acid chain; its full sequence is Acetylglutamate kinase (301 aa).

Substrate contacts are provided by residues 68–69, arginine 90, and asparagine 195; that span reads GG.

The protein belongs to the acetylglutamate kinase family. ArgB subfamily.

It localises to the cytoplasm. It carries out the reaction N-acetyl-L-glutamate + ATP = N-acetyl-L-glutamyl 5-phosphate + ADP. It participates in amino-acid biosynthesis; L-arginine biosynthesis; N(2)-acetyl-L-ornithine from L-glutamate: step 2/4. Functionally, catalyzes the ATP-dependent phosphorylation of N-acetyl-L-glutamate. This chain is Acetylglutamate kinase, found in Pseudomonas putida (strain ATCC 700007 / DSM 6899 / JCM 31910 / BCRC 17059 / LMG 24140 / F1).